Consider the following 1447-residue polypeptide: Bud site selection protein 4 (1447 aa).

Residues 1 to 16 show a composition bias toward basic and acidic residues; sequence MHDAESTVDSLLKEID. Disordered regions lie at residues 1-37 and 57-76; these read MHDA…TPHN and NTRS…KMST. S10 is modified (phosphoserine). 2 stretches are compositionally biased toward polar residues: residues 22–32 and 59–76; these read TKSNITQNGSE and RSNA…KMST. Phosphoserine is present on residues S78, S81, S91, S96, and S167. Residues 272 to 316 are disordered; that stretch reads NLPSKLLNTSNNSHSDSRSPTASVEDLNISTNLPGADSSQNNPVT. A compositionally biased stretch (polar residues) spans 277–316; sequence LLNTSNNSHSDSRSPTASVEDLNISTNLPGADSSQNNPVT. A Phosphothreonine modification is found at T365. S367 is modified (phosphoserine). The segment at 444–588 is disordered; sequence HQESEHANEQ…VEENEESEHV (145 aa). Basic and acidic residues predominate over residues 475–494; it reads EFQRNSKDGEEYRIVQHEES. Residues 497–509 are compositionally biased toward polar residues; sequence GQRTKSSEENIIN. Position 511 is a phosphoserine (S511). Residues 538–548 show a composition bias toward polar residues; it reads SSSCEDQSVSE. Residues 549 to 580 show a composition bias toward basic and acidic residues; sequence ARNKDSIEEKEVETKDENIETEKDESEYHKVE. S616 is subject to Phosphoserine. Residues 649-664 show a composition bias toward polar residues; the sequence is NSQFSQQSSITTASTV. Positions 649 to 672 are disordered; sequence NSQFSQQSSITTASTVDSKKDNGS. An interaction with IQG1 region spans residues 768 to 879; that stretch reads EHENIPLSTH…SLWESSYELK (112 aa). Phosphoserine is present on residues S805 and S811. A PH domain is found at 1302–1413; sequence NIYKEGYLLQ…WYNKLQEVVE (112 aa).

Belongs to the BUD4 family. Interacts with AXL1, IQG1 and SEC3. In terms of processing, phosphorylated by CDC28.

The protein localises to the bud neck. Functionally, required for establishment of the axial budding pattern in haploid cells. Cooperates with other bud site selection proteins to recognize a spatial landmark during mitosis and they subsequently become a landmark for downstream polarity establishment factors that coordinate axial budding and cytokinesis. Involved in the septin organization at the bud neck. This chain is Bud site selection protein 4 (BUD4), found in Saccharomyces cerevisiae (strain YJM789) (Baker's yeast).